The chain runs to 764 residues: 1,4-alpha-glucan branching enzyme GlgB (764 aa).

The segment at 1–46 is disordered; that stretch reads MSAARQPSPTVRDKAAPEPAAPAAPKGARAPRARRAAPPHGVRPAP. Over residues 17–28 the composition is skewed to low complexity; that stretch reads PEPAAPAAPKGA. Asp440 functions as the Nucleophile in the catalytic mechanism. Glu493 serves as the catalytic Proton donor.

The protein belongs to the glycosyl hydrolase 13 family. GlgB subfamily. Monomer.

It catalyses the reaction Transfers a segment of a (1-&gt;4)-alpha-D-glucan chain to a primary hydroxy group in a similar glucan chain.. It participates in glycan biosynthesis; glycogen biosynthesis. In terms of biological role, catalyzes the formation of the alpha-1,6-glucosidic linkages in glycogen by scission of a 1,4-alpha-linked oligosaccharide from growing alpha-1,4-glucan chains and the subsequent attachment of the oligosaccharide to the alpha-1,6 position. The sequence is that of 1,4-alpha-glucan branching enzyme GlgB (glgB) from Kitasatospora aureofaciens (Streptomyces aureofaciens).